A 705-amino-acid polypeptide reads, in one-letter code: Polyribonucleotide nucleotidyltransferase (705 aa).

Mg(2+) is bound by residues Asp-487 and Asp-493. Residues 554-613 (PKILTMTINPDKIRDVIGPSGKQINKIIEETGVKIDIEQDGTIFISSTDESGNQKAKKII) enclose the KH domain. Residues 623–691 (GQLYLGKVKR…KQGRVNLSRK (69 aa)) enclose the S1 motif domain.

The protein belongs to the polyribonucleotide nucleotidyltransferase family. As to quaternary structure, homodimer. Component of a possible RNA degradosome complex composed of rny, rnjA, rnjB, pnp, pfkA and eno (although rnjA and rnjB's presence is unclear). RNA helicase CshA may also be a member of this complex. It depends on Mg(2+) as a cofactor.

It localises to the cytoplasm. The catalysed reaction is RNA(n+1) + phosphate = RNA(n) + a ribonucleoside 5'-diphosphate. In terms of biological role, involved in mRNA degradation. Catalyzes the phosphorolysis of single-stranded polyribonucleotides processively in the 3'- to 5'-direction. Necessary for competence development in Bacillus subtilis. May be necessary for modification of the srfA transcript (stabilization or translation activation). Involved in processing precursor type I toxin-antitoxin RNAs antitoxin SR4 and SR5 RNAs to their mature forms. In Bacillus subtilis (strain 168), this protein is Polyribonucleotide nucleotidyltransferase.